Consider the following 1394-residue polypeptide: DNA-directed RNA polymerase subunit beta (1394 aa).

Belongs to the RNA polymerase beta chain family. In terms of assembly, the RNAP catalytic core consists of 2 alpha, 1 beta, 1 beta' and 1 omega subunit. When a sigma factor is associated with the core the holoenzyme is formed, which can initiate transcription.

It catalyses the reaction RNA(n) + a ribonucleoside 5'-triphosphate = RNA(n+1) + diphosphate. In terms of biological role, DNA-dependent RNA polymerase catalyzes the transcription of DNA into RNA using the four ribonucleoside triphosphates as substrates. This is DNA-directed RNA polymerase subunit beta from Anaplasma phagocytophilum (Ehrlichia phagocytophila).